The chain runs to 100 residues: Protein MEN-8 (100 aa).

The N-terminal stretch at 1–33 (MANNMKSATFCKATWAIFLVALAILVQLKGSEA) is a signal peptide. 4 disulfide bridges follow: Cys-38-Cys-76, Cys-48-Cys-65, Cys-66-Cys-91, and Cys-78-Cys-98.

Belongs to the A9/FIL1 family.

It localises to the secreted. This is Protein MEN-8 (MEN-8) from Silene latifolia (White campion).